Consider the following 319-residue polypeptide: Protein-methionine methyltransferase laeA (319 aa).

The segment at 269-293 (REPQSGTCSVQRENGANGDRSTLSA) is disordered. Over residues 270–293 (EPQSGTCSVQRENGANGDRSTLSA) the composition is skewed to polar residues.

The protein belongs to the methyltransferase superfamily. LaeA methyltransferase family. In terms of assembly, component of the heterotrimeric velvet complex composed of laeA, veA and velB; VeA acting as a bridging protein between laeA and velB.

It localises to the nucleus. It catalyses the reaction L-methionyl-[protein] + S-adenosyl-L-methionine = S-methyl-L-methionyl-[protein] + S-adenosyl-L-homocysteine. In terms of biological role, methyltransferase; component of the velvet transcription factor complex that acts as a global regulator for secondary metabolite gene expression. Controls the expression of the chaetoglobosin A biosynthesis cluster via the cheR transcription factor and the subsequent production of chaetoglobosin A. Positively regulates the expression of smtA and negatively regulates the expression of velB. LaeA also regulates pigmentation and spores production. The chain is Protein-methionine methyltransferase laeA from Chaetomium globosum (strain ATCC 6205 / CBS 148.51 / DSM 1962 / NBRC 6347 / NRRL 1970) (Soil fungus).